Reading from the N-terminus, the 485-residue chain is Taxane 13-alpha-hydroxylase (485 aa).

Cysteine 431 lines the heme pocket.

This sequence belongs to the cytochrome P450 family. The cofactor is heme.

The enzyme catalyses taxa-4(20),11-dien-5alpha-ol + reduced [NADPH--hemoprotein reductase] + O2 = taxa-4(20),11-dien-5alpha,13alpha-diol + oxidized [NADPH--hemoprotein reductase] + H2O + H(+). Its pathway is alkaloid biosynthesis; taxol biosynthesis. Its function is as follows. Involved in the transformation of a taxadienyl acetate by hydroxylation at C13 to yield taxadien-5-alpha-acetoxy-13-alpha-ol. In Taxus cuspidata (Japanese yew), this protein is Taxane 13-alpha-hydroxylase (CYP725A2).